A 1288-amino-acid chain; its full sequence is 5-oxoprolinase (1288 aa).

Thr151 is modified (phosphothreonine). A disordered region spans residues 1249 to 1269; sequence GGGGYGDPEDPAPLPGSPLQP. Ser1265 carries the post-translational modification Phosphoserine.

The protein belongs to the oxoprolinase family. Homodimer. As to expression, expressed in coronary artery and kidney.

It localises to the cytoplasm. Its subcellular location is the cytosol. The catalysed reaction is 5-oxo-L-proline + ATP + 2 H2O = L-glutamate + ADP + phosphate + H(+). Catalyzes the cleavage of 5-oxo-L-proline to form L-glutamate coupled to the hydrolysis of ATP to ADP and inorganic phosphate. The protein is 5-oxoprolinase (OPLAH) of Bos taurus (Bovine).